We begin with the raw amino-acid sequence, 192 residues long: Fe/S biogenesis protein NfuA (192 aa).

[4Fe-4S] cluster is bound by residues Cys-150 and Cys-153.

The protein belongs to the NfuA family. In terms of assembly, homodimer. Requires [4Fe-4S] cluster as cofactor.

Involved in iron-sulfur cluster biogenesis. Binds a 4Fe-4S cluster, can transfer this cluster to apoproteins, and thereby intervenes in the maturation of Fe/S proteins. Could also act as a scaffold/chaperone for damaged Fe/S proteins. The protein is Fe/S biogenesis protein NfuA of Ruthia magnifica subsp. Calyptogena magnifica.